Reading from the N-terminus, the 348-residue chain is Holliday junction branch migration complex subunit RuvB (348 aa).

A compositionally biased stretch (polar residues) spans 1–10 (MAIVSSNAGS). Residues 1–41 (MAIVSSNAGSSAPRREPVLDAQPLPEESSGRPDDGLRPKRL) form a disordered region. The tract at residues 13–197 (PRREPVLDAQ…FGLIQRLEFY (185 aa)) is large ATPase domain (RuvB-L). Residues 28 to 41 (SSGRPDDGLRPKRL) show a composition bias toward basic and acidic residues. ATP-binding residues include leucine 36, arginine 37, glycine 78, lysine 81, threonine 82, threonine 83, arginine 187, tyrosine 197, and arginine 234. Mg(2+) is bound at residue threonine 82. The interval 198 to 269 (GQEDLEAIVS…LVSQALSLHR (72 aa)) is small ATPAse domain (RuvB-S). A head domain (RuvB-H) region spans residues 272 to 348 (HRGLDAGDRR…RAHLREQEVA (77 aa)). DNA contacts are provided by arginine 327 and arginine 332.

It belongs to the RuvB family. In terms of assembly, homohexamer. Forms an RuvA(8)-RuvB(12)-Holliday junction (HJ) complex. HJ DNA is sandwiched between 2 RuvA tetramers; dsDNA enters through RuvA and exits via RuvB. An RuvB hexamer assembles on each DNA strand where it exits the tetramer. Each RuvB hexamer is contacted by two RuvA subunits (via domain III) on 2 adjacent RuvB subunits; this complex drives branch migration. In the full resolvosome a probable DNA-RuvA(4)-RuvB(12)-RuvC(2) complex forms which resolves the HJ.

Its subcellular location is the cytoplasm. It catalyses the reaction ATP + H2O = ADP + phosphate + H(+). In terms of biological role, the RuvA-RuvB-RuvC complex processes Holliday junction (HJ) DNA during genetic recombination and DNA repair, while the RuvA-RuvB complex plays an important role in the rescue of blocked DNA replication forks via replication fork reversal (RFR). RuvA specifically binds to HJ cruciform DNA, conferring on it an open structure. The RuvB hexamer acts as an ATP-dependent pump, pulling dsDNA into and through the RuvAB complex. RuvB forms 2 homohexamers on either side of HJ DNA bound by 1 or 2 RuvA tetramers; 4 subunits per hexamer contact DNA at a time. Coordinated motions by a converter formed by DNA-disengaged RuvB subunits stimulates ATP hydrolysis and nucleotide exchange. Immobilization of the converter enables RuvB to convert the ATP-contained energy into a lever motion, pulling 2 nucleotides of DNA out of the RuvA tetramer per ATP hydrolyzed, thus driving DNA branch migration. The RuvB motors rotate together with the DNA substrate, which together with the progressing nucleotide cycle form the mechanistic basis for DNA recombination by continuous HJ branch migration. Branch migration allows RuvC to scan DNA until it finds its consensus sequence, where it cleaves and resolves cruciform DNA. The chain is Holliday junction branch migration complex subunit RuvB from Parasynechococcus marenigrum (strain WH8102).